Consider the following 263-residue polypeptide: Chymotrypsinogen 2 (263 aa).

Positions 1–18 (MAFLWLLSCFALLGTAFG) are cleaved as a signal peptide. Cystine bridges form between Cys19–Cys140, Cys60–Cys76, Cys154–Cys219, Cys186–Cys200, and Cys209–Cys238. The Peptidase S1 domain occupies 34 to 261 (IVNGEDAVPG…LIPWVQQILQ (228 aa)). His75 (charge relay system) is an active-site residue. At Ser93 the chain carries Phosphoserine. The Charge relay system role is filled by Asp120. Catalysis depends on Ser213, which acts as the Charge relay system.

This sequence belongs to the peptidase S1 family.

The protein localises to the secreted. It localises to the extracellular space. It catalyses the reaction Preferential cleavage: Tyr-|-Xaa, Trp-|-Xaa, Phe-|-Xaa, Leu-|-Xaa.. The polypeptide is Chymotrypsinogen 2 (CTRB1) (Canis lupus familiaris (Dog)).